A 269-amino-acid polypeptide reads, in one-letter code: Small ribosomal subunit protein eS1 (269 aa).

Disordered regions lie at residues 1–20 (MAVGKNKGVSKGGKKGSKKK) and 249–269 (AASGVVVDRPEGYEPPVQESV).

It belongs to the eukaryotic ribosomal protein eS1 family. In terms of assembly, component of the small ribosomal subunit. Mature ribosomes consist of a small (40S) and a large (60S) subunit. The 40S subunit contains about 33 different proteins and 1 molecule of RNA (18S). The 60S subunit contains about 49 different proteins and 3 molecules of RNA (28S, 5.8S and 5S).

The protein localises to the cytoplasm. The sequence is that of Small ribosomal subunit protein eS1 from Anopheles darlingi (Mosquito).